The chain runs to 936 residues: Protein NNF2 (936 aa).

Residues 1 to 41 (MEEQFTNQKKVSHLQSLMNTKRSEQPTEFAKKHRFKDTLAL) lie on the Lumenal side of the membrane. Residue Lys-10 forms a Glycyl lysine isopeptide (Lys-Gly) (interchain with G-Cter in ubiquitin) linkage. A helical membrane pass occupies residues 42 to 62 (FLVFLSFNHFTSLCLLVSFIV). At 63 to 120 (ATKCKDFLANCFIILFLSKKPSRHIGEVAHIDISTSKVTNGSSNRKSNSRFFGNSKNS) the chain is on the cytoplasmic side. The helical transmembrane segment at 121-141 (FVIPIPVLICEILFAMLLKIY) threads the bilayer. The Lumenal segment spans residues 142-245 (GGDYFVKPIK…FKMLGKHSDS (104 aa)). The helical transmembrane segment at 246–266 (MIYYLSFHILFFSFASSLLHP) threads the bilayer. Topologically, residues 267-936 (HRQTAENKPL…NIHSLIGNSY (670 aa)) are cytoplasmic. Disordered regions lie at residues 297–351 (RISS…SNIL), 387–437 (GSNS…DFFS), and 512–533 (TSEN…QEKH). Residues 299 to 308 (SSSSSVSADS) show a composition bias toward low complexity. A compositionally biased stretch (polar residues) spans 325 to 351 (LSSSNQTIHPSQQNNSPVPLSSHSNIL). Low complexity-rich tracts occupy residues 394 to 405 (TTTTSTTTSPTT) and 414 to 428 (SLSN…SNGN). The segment covering 512–529 (TSENSLTPTNSNTSYVSN) has biased composition (polar residues).

It is found in the endoplasmic reticulum membrane. The protein is Protein NNF2 (NNF2) of Saccharomyces cerevisiae (strain ATCC 204508 / S288c) (Baker's yeast).